The primary structure comprises 249 residues: NADH-quinone oxidoreductase subunit C (249 aa).

This sequence belongs to the complex I 30 kDa subunit family. In terms of assembly, NDH-1 is composed of 14 different subunits. Subunits NuoB, C, D, E, F, and G constitute the peripheral sector of the complex.

Its subcellular location is the cell inner membrane. It carries out the reaction a quinone + NADH + 5 H(+)(in) = a quinol + NAD(+) + 4 H(+)(out). NDH-1 shuttles electrons from NADH, via FMN and iron-sulfur (Fe-S) centers, to quinones in the respiratory chain. The immediate electron acceptor for the enzyme in this species is believed to be ubiquinone. Couples the redox reaction to proton translocation (for every two electrons transferred, four hydrogen ions are translocated across the cytoplasmic membrane), and thus conserves the redox energy in a proton gradient. The chain is NADH-quinone oxidoreductase subunit C from Stenotrophomonas maltophilia (strain R551-3).